The chain runs to 119 residues: MISKPDKNKLRLKRHRRVRGKISGTAERPRLSVFRSNTNIYAQLIDDVAGVTLASASTLDKSVSKDATKVEQAQAVGKAIAEAGKAKGITEVVFDRGGYIYHGRVKALADAARENGLEF.

The protein belongs to the universal ribosomal protein uL18 family. As to quaternary structure, part of the 50S ribosomal subunit; part of the 5S rRNA/L5/L18/L25 subcomplex. Contacts the 5S and 23S rRNAs.

In terms of biological role, this is one of the proteins that bind and probably mediate the attachment of the 5S RNA into the large ribosomal subunit, where it forms part of the central protuberance. This is Large ribosomal subunit protein uL18 from Lactobacillus delbrueckii subsp. bulgaricus (strain ATCC 11842 / DSM 20081 / BCRC 10696 / JCM 1002 / NBRC 13953 / NCIMB 11778 / NCTC 12712 / WDCM 00102 / Lb 14).